We begin with the raw amino-acid sequence, 137 residues long: MRNFDLSPLYRSAIGFDRLFNLLENNQSQSNGGYPPYNVELVDENHYRIAIAVAGFAESELEITAQDNLLVVKGAHADEQKERTYLYQGIAERNFERKFQLAENIHVRGANLVNGLLYIDLERVIPEANKPRRIEIN.

The region spanning 28–137 (SQSNGGYPPY…ANKPRRIEIN (110 aa)) is the sHSP domain.

The protein belongs to the small heat shock protein (HSP20) family. Monomer. Forms homomultimers of about 100-150 subunits at optimal growth temperatures. Conformation changes to monomers at high temperatures or high ionic concentrations.

It is found in the cytoplasm. In terms of biological role, associates with aggregated proteins, together with IbpB, to stabilize and protect them from irreversible denaturation and extensive proteolysis during heat shock and oxidative stress. Aggregated proteins bound to the IbpAB complex are more efficiently refolded and reactivated by the ATP-dependent chaperone systems ClpB and DnaK/DnaJ/GrpE. Its activity is ATP-independent. This Citrobacter koseri (strain ATCC BAA-895 / CDC 4225-83 / SGSC4696) protein is Small heat shock protein IbpA.